The chain runs to 388 residues: UPF0229 protein BH1031 (388 aa).

The interval His80 to Glu117 is disordered. Residues Gln103 to Asp113 are compositionally biased toward gly residues.

This sequence belongs to the UPF0229 family.

In Halalkalibacterium halodurans (strain ATCC BAA-125 / DSM 18197 / FERM 7344 / JCM 9153 / C-125) (Bacillus halodurans), this protein is UPF0229 protein BH1031.